Reading from the N-terminus, the 457-residue chain is UDP-glucosyltransferase 45 (457 aa).

The active-site Proton acceptor is H21. H21 lines the an anthocyanidin pocket. D112 (charge relay) is an active-site residue. UDP-alpha-D-glucose is bound by residues T134, Q336, H351, W354, N355, S356, E359, D375, and Q376.

The protein belongs to the UDP-glycosyltransferase family.

It catalyses the reaction (20S)-protopanaxadiol + UDP-alpha-D-glucose = (20S)-ginsenoside Rh2 + UDP + H(+). The protein operates within secondary metabolite biosynthesis; terpenoid biosynthesis. In terms of biological role, component of the triterpene saponins (e.g. PPD-type ginsenosides) biosynthetic pathway. Glycosyltransferase that catalyzes the biosynthesis of ginsenoside Rh2 from protopanaxadiol (PPD). In Panax ginseng (Korean ginseng), this protein is UDP-glucosyltransferase 45.